The chain runs to 215 residues: Protein-L-isoaspartate O-methyltransferase (215 aa).

Ser62 is an active-site residue.

The protein belongs to the methyltransferase superfamily. L-isoaspartyl/D-aspartyl protein methyltransferase family.

The protein localises to the cytoplasm. The enzyme catalyses [protein]-L-isoaspartate + S-adenosyl-L-methionine = [protein]-L-isoaspartate alpha-methyl ester + S-adenosyl-L-homocysteine. Its function is as follows. Catalyzes the methyl esterification of L-isoaspartyl residues in peptides and proteins that result from spontaneous decomposition of normal L-aspartyl and L-asparaginyl residues. It plays a role in the repair and/or degradation of damaged proteins. In Ruegeria pomeroyi (strain ATCC 700808 / DSM 15171 / DSS-3) (Silicibacter pomeroyi), this protein is Protein-L-isoaspartate O-methyltransferase.